A 232-amino-acid chain; its full sequence is MKYTIVPAPRNLHDYVLELLEEWQPDCLDCEYSHGSPSPPTLHDLFDVELETSHSPFVGLCDSCAEADTDSSASTEADSGFSPLSTPPVSPIPPHPTSPASISDDMLLCLEEMPTFDDEDEVRSAATTFERWENTFDPHVGPIFGCLRCAFYQEQDDNALCGLCYLKALAEEPASAGAEEEDDEVIFVSAKPGGRKRSAATPCEPDGVSKRPCVPEPEQTEPLDLSLKPRPN.

Residues 40–48 form an interaction with RB1 in competition with E2F1 region; that stretch reads PTLHDLFDV. The span at 69–84 shows a compositional bias: low complexity; it reads TDSSASTEADSGFSPL. Positions 69 to 97 are disordered; sequence TDSSASTEADSGFSPLSTPPVSPIPPHPT. Residues 85-97 show a composition bias toward pro residues; the sequence is STPPVSPIPPHPT. An LXCXE motif, interaction with host RB1 motif is present at residues 107–111; sequence LLCLE. The segment at 146–164 is a zinc-finger region; it reads CLRCAFYQEQDDNALCGLC. Positions 175 to 232 are disordered; it reads SAGAEEEDDEVIFVSAKPGGRKRSAATPCEPDGVSKRPCVPEPEQTEPLDLSLKPRPN. A PXDLS motif, CTBP-binding motif is present at residues 222–226; sequence PLDLS. A Nuclear localization signal motif is present at residues 228-232; the sequence is KPRPN.

Belongs to the adenoviridae E1A protein family. In terms of assembly, interacts with host UBE2I; this interaction interferes with polySUMOylation. Interacts with host RB1; this interaction induces the aberrant dissociation of RB1-E2F1 complex thereby disrupting the activity of RB1 and activating E2F1-regulated genes. Interacts with host ATF7; the interaction enhances ATF7-mediated viral transactivation activity which requires the zinc binding domains of both proteins. Isoform early E1A 32 kDa protein and isoform early E1A 26 kDa protein interact (via N-terminus) with CUL1 and E3 ubiquitin ligase RBX1; these interactions inhibit RBX1-CUL1-dependent elongation reaction of ubiquitin chains and attenuate ubiquitination of SCF(FBXW7) target proteins. Interacts (via PXLXP motif) with host ZMYND11/BS69 (via MYND-type zinc finger); this interaction inhibits E1A mediated transactivation. Interacts with host EP300; this interaction stimulates the acetylation of RB1 by recruiting EP300 and RB1 into a multimeric-protein complex. Interacts with host CTBP1 and CTBP2; this interaction seems to potentiate viral replication. Interacts with host DCAF7. Interacts with host DYRK1A. Interacts with host KPNA4; this interaction allows E1A import into the host nucleus. Interacts with host EP400; this interaction stabilizes MYC. Interacts with host TBP protein; this interaction probably disrupts the TBP-TATA complex.

Its subcellular location is the host nucleus. Its function is as follows. Plays a role in viral genome replication by driving entry of quiescent cells into the cell cycle. Stimulation of progression from G1 to S phase allows the virus to efficiently use the cellular DNA replicating machinery to achieve viral genome replication. E1A protein has both transforming and trans-activating activities. Induces the disassembly of the E2F1 transcription factor from RB1 by direct competition for the same binding site on RB1, with subsequent transcriptional activation of E2F1-regulated S-phase genes and of the E2 region of the adenoviral genome. Release of E2F1 leads to the ARF-mediated inhibition of MDM2 and causes TP53/p53 to accumulate because it is not targeted for degradation by MDM2-mediated ubiquitination anymore. This increase in TP53, in turn, would arrest the cell proliferation and direct its death but this effect is counteracted by the viral protein E1B-55K. Inactivation of the ability of RB1 to arrest the cell cycle is critical for cellular transformation, uncontrolled cellular growth and proliferation induced by viral infection. Interaction with RBX1 and CUL1 inhibits ubiquitination of the proteins targeted by SCF(FBXW7) ubiquitin ligase complex, and may be linked to unregulated host cell proliferation. The tumorigenesis-restraining activity of E1A may be related to the disruption of the host CtBP-CtIP complex through the CtBP binding motif. The protein is Early E1A protein of Canine adenovirus serotype 2 (strain Toronto A 26-61) (CAdV-2).